Consider the following 416-residue polypeptide: Actin-like protein 9 (416 aa).

The disordered stretch occupies residues 1–23; the sequence is MDPNQGNPLEPQDSPEIPKPSLN.

This sequence belongs to the actin family. As to quaternary structure, interacts with ACTL7A.

The protein localises to the cytoplasmic vesicle. Its subcellular location is the secretory vesicle. It localises to the acrosome. The protein resides in the cytoplasm. It is found in the cytoskeleton. The protein localises to the perinuclear theca. In terms of biological role, testis-specic protein that plays an important role in fusion of proacrosomal vesicles and perinuclear theca formation. The protein is Actin-like protein 9 (ACTL9) of Bos taurus (Bovine).